We begin with the raw amino-acid sequence, 562 residues long: NAD-dependent malic enzyme (562 aa).

Catalysis depends on tyrosine 101, which acts as the Proton donor. Residue arginine 154 coordinates NAD(+). The active-site Proton acceptor is lysine 172. Residues glutamate 243, aspartate 244, and aspartate 267 each contribute to the a divalent metal cation site. Aspartate 267 and asparagine 415 together coordinate NAD(+).

The protein belongs to the malic enzymes family. Homotetramer. It depends on Mg(2+) as a cofactor. The cofactor is Mn(2+).

The enzyme catalyses (S)-malate + NAD(+) = pyruvate + CO2 + NADH. The catalysed reaction is oxaloacetate + H(+) = pyruvate + CO2. This chain is NAD-dependent malic enzyme, found in Shewanella woodyi (strain ATCC 51908 / MS32).